The sequence spans 932 residues: Protein translocase subunit SecA (932 aa).

ATP-binding positions include Gln-83, 101-105 (GEGKT), and Asp-491.

This sequence belongs to the SecA family. In terms of assembly, monomer and homodimer. Part of the essential Sec protein translocation apparatus which comprises SecA, SecYEG and auxiliary proteins SecDF. Other proteins may also be involved.

It localises to the cell inner membrane. Its subcellular location is the cellular thylakoid membrane. The protein resides in the cytoplasm. It catalyses the reaction ATP + H2O + cellular proteinSide 1 = ADP + phosphate + cellular proteinSide 2.. Functionally, part of the Sec protein translocase complex. Interacts with the SecYEG preprotein conducting channel. Has a central role in coupling the hydrolysis of ATP to the transfer of proteins into and across the cell membrane, serving as an ATP-driven molecular motor driving the stepwise translocation of polypeptide chains across the membrane. In terms of biological role, probably participates in protein translocation into and across both the cytoplasmic and thylakoid membranes in cyanobacterial cells. This is Protein translocase subunit SecA from Cyanothece sp. (strain PCC 7425 / ATCC 29141).